The chain runs to 337 residues: MTRVAINGFGRIGRNFLRCWLGRTDSQLEVVGINDTSDPRTNAHLLRYDSMLGKLDADISADENSITVNGKTIKCVSDRNPLNLPWAEWNVDLVIEATGVFVTHEGATKHVQAGAKKVLITAPGKGPNIGTYVVGVNAHEYKHEEYEVISNASCTTNCLAPFGKVINDNFGIIKGTMTTTHSYTGDQRILDASHRDLRRARAAAVNIVPTSTGAAKAVALVIPELQGKLNGIALRVPTPNVSVVDLVVQVEKNTIAEQVNGVLKEAANTSLKGVLEYTDLELVSSDFRGTDCSSTVDGSLTMVMGGDMVKVIAWYDNEWGYSQRVVDLAEIVAKNWK.

Residues 11–12 (RI), D35, R79, and T121 contribute to the NAD(+) site. Residues 153–155 (SCT), T184, R199, 212–213 (TG), and R235 contribute to the D-glyceraldehyde 3-phosphate site. The active-site Nucleophile is the C154. N317 serves as a coordination point for NAD(+).

It belongs to the glyceraldehyde-3-phosphate dehydrogenase family. As to quaternary structure, homotetramer.

Its subcellular location is the cytoplasm. The enzyme catalyses D-glyceraldehyde 3-phosphate + phosphate + NADP(+) = (2R)-3-phospho-glyceroyl phosphate + NADPH + H(+). The catalysed reaction is D-glyceraldehyde 3-phosphate + phosphate + NAD(+) = (2R)-3-phospho-glyceroyl phosphate + NADH + H(+). It functions in the pathway carbohydrate degradation; glycolysis; pyruvate from D-glyceraldehyde 3-phosphate: step 1/5. Functionally, involved in photosynthetic carbon assimilation. Catalyzes the NAD(P)-dependent oxidative phosphorylation of glyceraldehyde 3-phosphate (G3P) to 1,3-bisphosphoglycerate (BPG). The first reaction step involves the formation of a hemiacetal intermediate between G3P and a cysteine residue, and this hemiacetal intermediate is then oxidized to a thioester, with concomitant reduction of NAD to NADH. The reduced NADH is then exchanged with the second NAD, and the thioester is attacked by a nucleophilic inorganic phosphate to produce BPG. It can use both NADP and NAD. This is Glyceraldehyde-3-phosphate dehydrogenase 2 (gap2) from Synechocystis sp. (strain ATCC 27184 / PCC 6803 / Kazusa).